A 455-amino-acid polypeptide reads, in one-letter code: Serine--tRNA ligase (455 aa).

252–254 provides a ligand contact to L-serine; sequence TAE. ATP contacts are provided by residues 283-285 and Val-299; that span reads RKE. Residue Glu-306 participates in L-serine binding. An ATP-binding site is contributed by 370 to 373; that stretch reads EVVS. Residue Thr-406 coordinates L-serine.

This sequence belongs to the class-II aminoacyl-tRNA synthetase family. Type-1 seryl-tRNA synthetase subfamily. In terms of assembly, homodimer. The tRNA molecule binds across the dimer.

The protein localises to the cytoplasm. The catalysed reaction is tRNA(Ser) + L-serine + ATP = L-seryl-tRNA(Ser) + AMP + diphosphate + H(+). It catalyses the reaction tRNA(Sec) + L-serine + ATP = L-seryl-tRNA(Sec) + AMP + diphosphate + H(+). Its pathway is aminoacyl-tRNA biosynthesis; selenocysteinyl-tRNA(Sec) biosynthesis; L-seryl-tRNA(Sec) from L-serine and tRNA(Sec): step 1/1. Its function is as follows. Catalyzes the attachment of serine to tRNA(Ser). Is also able to aminoacylate tRNA(Sec) with serine, to form the misacylated tRNA L-seryl-tRNA(Sec), which will be further converted into selenocysteinyl-tRNA(Sec). This is Serine--tRNA ligase from Thermococcus gammatolerans (strain DSM 15229 / JCM 11827 / EJ3).